Consider the following 149-residue polypeptide: MRCPFCAAEETKVVDSRLAADGYQIRRRRECTSCKERFTTFESAELVVPYVIKNNGNRVPFDANKLRVSLSRALEKRPVSADDLEKAISKIIIQLQSTGEREVPSKLVGSLAMDALKQLDKVAYIRFASVYLSFDDIEEFTKEIEKLRE.

A zinc finger lies at 3–34 (CPFCAAEETKVVDSRLAADGYQIRRRRECTSC). Positions 49-139 (PYVIKNNGNR…VYLSFDDIEE (91 aa)) constitute an ATP-cone domain.

The protein belongs to the NrdR family. Zn(2+) is required as a cofactor.

In terms of biological role, negatively regulates transcription of bacterial ribonucleotide reductase nrd genes and operons by binding to NrdR-boxes. In Actinobacillus pleuropneumoniae serotype 5b (strain L20), this protein is Transcriptional repressor NrdR.